The chain runs to 489 residues: Lysine--tRNA ligase (489 aa).

Mg(2+) is bound by residues glutamate 399 and glutamate 406.

The protein belongs to the class-II aminoacyl-tRNA synthetase family. As to quaternary structure, homodimer. It depends on Mg(2+) as a cofactor.

Its subcellular location is the cytoplasm. The enzyme catalyses tRNA(Lys) + L-lysine + ATP = L-lysyl-tRNA(Lys) + AMP + diphosphate. In Roseiflexus castenholzii (strain DSM 13941 / HLO8), this protein is Lysine--tRNA ligase.